A 139-amino-acid chain; its full sequence is Histone H2AX (139 aa).

The segment at 1–24 (MSSTATTKGGRGKPKASKSVSRSS) is disordered. Serine 136 bears the Phosphoserine; by ATM and ATR mark. The [ST]-Q motif signature appears at 136 to 137 (SQ).

The protein belongs to the histone H2A family. In terms of assembly, the nucleosome is a histone octamer containing two molecules each of H2A, H2B, H3 and H4 assembled in one H3-H4 heterotetramer and two H2A-H2B heterodimers. The octamer wraps approximately 147 bp of DNA. Interacts with numerous proteins required for DNA damage signaling and repair when phosphorylated on Ser-136. In terms of processing, phosphorylated on Ser-136 (to form gamma-H2AX) in response to DNA double strand breaks (DSBs) generated by exogenous genotoxic agents and by stalled replication forks, and may also occur during meiotic recombination events. Phosphorylation can extend up to several thousand nucleosomes from the actual site of the DSB and may mark the surrounding chromatin for recruitment of proteins required for DNA damage signaling and repair. Widespread phosphorylation may also serve to amplify the damage signal or aid repair of persistent lesions. Phosphorylation of Ser-136 in response to ionizing radiation is mediated by ATM while defects in DNA replication induce Ser-136 phosphorylation subsequent to activation of ATR. Dephosphorylation of Ser-136 by PP2A is required for DNA DSB repair.

It is found in the nucleus. It localises to the chromosome. In terms of biological role, variant histone H2A which replaces conventional H2A in a subset of nucleosomes. Nucleosomes wrap and compact DNA into chromatin, limiting DNA accessibility to the cellular machineries which require DNA as a template. Histones thereby play a central role in transcription regulation, DNA repair, DNA replication and chromosomal stability. DNA accessibility is regulated via a complex set of post-translational modifications of histones, also called histone code, and nucleosome remodeling. Required for checkpoint-mediated arrest of cell cycle progression in response to low doses of ionizing radiation and for efficient repair of DNA double strand breaks (DSBs) specifically when modified by C-terminal phosphorylation. The sequence is that of Histone H2AX (HIS2A) from Cicer arietinum (Chickpea).